The following is a 122-amino-acid chain: Large ribosomal subunit protein uL14 (122 aa).

The protein belongs to the universal ribosomal protein uL14 family. Part of the 50S ribosomal subunit. Forms a cluster with proteins L3 and L19. In the 70S ribosome, L14 and L19 interact and together make contacts with the 16S rRNA in bridges B5 and B8.

Its function is as follows. Binds to 23S rRNA. Forms part of two intersubunit bridges in the 70S ribosome. This is Large ribosomal subunit protein uL14 from Burkholderia multivorans (strain ATCC 17616 / 249).